Reading from the N-terminus, the 413-residue chain is MSFYEELKWRNLIKDCNNEIQVKELLDNNQVKFYCGFDPTSHSLTVGHLIQITMILLMQRQGHLPVILVGGATGLIGDPKETEERKLLSLENSLQNAKSIESQLKTILLNKQVEFVNNYQWLSQIDIISFLRNYGKFFNINYMLSKHVVAKRLASGISFTEFSYMILQSLDFHHLYKNHKVRLQLGGSDQWGNITSGLEIIRKLEKKSDALGVSTPLLLNSDGTKFGKSEKRVLWLNPLMTSPYEIYQYFLNVSDKEVINYLKMLTLIPKKGILELEKKTLENPQKRLAQKALTQSIINLIHSSDILQECIKTNQILFSNAKKESFQEKDFILLQKTLFCHSIKEDILLVDALVQTKLATSKSEAREFIKDNTIKLFNQKIKSLDFIITKENTLFGKYILLKKGKKNNALIVF.

Residue Tyr34 coordinates L-tyrosine. Residues 39 to 48 (PTSHSLTVGH) carry the 'HIGH' region motif. The L-tyrosine site is built by Tyr164 and Gln168. The 'KMSKS' region motif lies at 225 to 229 (KFGKS). Lys228 contacts ATP. An S4 RNA-binding domain is found at 347–413 (ILLVDALVQT…GKKNNALIVF (67 aa)).

Belongs to the class-I aminoacyl-tRNA synthetase family. TyrS type 1 subfamily. Homodimer.

The protein resides in the cytoplasm. It carries out the reaction tRNA(Tyr) + L-tyrosine + ATP = L-tyrosyl-tRNA(Tyr) + AMP + diphosphate + H(+). Catalyzes the attachment of tyrosine to tRNA(Tyr) in a two-step reaction: tyrosine is first activated by ATP to form Tyr-AMP and then transferred to the acceptor end of tRNA(Tyr). This chain is Tyrosine--tRNA ligase, found in Aster yellows witches'-broom phytoplasma (strain AYWB).